A 479-amino-acid chain; its full sequence is Aspartyl/glutamyl-tRNA(Asn/Gln) amidotransferase subunit B (479 aa).

It belongs to the GatB/GatE family. GatB subfamily. As to quaternary structure, heterotrimer of A, B and C subunits.

It carries out the reaction L-glutamyl-tRNA(Gln) + L-glutamine + ATP + H2O = L-glutaminyl-tRNA(Gln) + L-glutamate + ADP + phosphate + H(+). The enzyme catalyses L-aspartyl-tRNA(Asn) + L-glutamine + ATP + H2O = L-asparaginyl-tRNA(Asn) + L-glutamate + ADP + phosphate + 2 H(+). Its function is as follows. Allows the formation of correctly charged Asn-tRNA(Asn) or Gln-tRNA(Gln) through the transamidation of misacylated Asp-tRNA(Asn) or Glu-tRNA(Gln) in organisms which lack either or both of asparaginyl-tRNA or glutaminyl-tRNA synthetases. The reaction takes place in the presence of glutamine and ATP through an activated phospho-Asp-tRNA(Asn) or phospho-Glu-tRNA(Gln). This is Aspartyl/glutamyl-tRNA(Asn/Gln) amidotransferase subunit B from Mycoplasma capricolum subsp. capricolum (strain California kid / ATCC 27343 / NCTC 10154).